The primary structure comprises 135 residues: Probable histone H2A.1 (135 aa).

Belongs to the histone H2A family. The nucleosome is a histone octamer containing two molecules each of H2A, H2B, H3 and H4 assembled in one H3-H4 heterotetramer and two H2A-H2B heterodimers. The octamer wraps approximately 147 bp of DNA.

It is found in the nucleus. Its subcellular location is the chromosome. Core component of nucleosome. Nucleosomes wrap and compact DNA into chromatin, limiting DNA accessibility to the cellular machineries which require DNA as a template. Histones thereby play a central role in transcription regulation, DNA repair, DNA replication and chromosomal stability. DNA accessibility is regulated via a complex set of post-translational modifications of histones, also called histone code, and nucleosome remodeling. This Oryza sativa subsp. japonica (Rice) protein is Probable histone H2A.1.